The chain runs to 309 residues: Taste receptor type 2 member 46 (309 aa).

Methionine 1 is a topological domain (extracellular). The helical transmembrane segment at isoleucine 2–phenylalanine 22 threads the bilayer. Residues alanine 23–glutamine 46 lie on the Cytoplasmic side of the membrane. The helical transmembrane segment at isoleucine 47–tyrosine 67 threads the bilayer. The Extracellular segment spans residues alanine 68–asparagine 86. A helical transmembrane segment spans residues leucine 87 to leucine 107. Residues leucine 108–lysine 126 lie on the Cytoplasmic side of the membrane. A helical membrane pass occupies residues serine 127–isoleucine 147. Residues asparagine 148–threonine 178 lie on the Extracellular side of the membrane. N-linked (GlcNAc...) asparagine glycosylation is found at asparagine 161 and asparagine 176. A helical membrane pass occupies residues valine 179–isoleucine 199. At cysteine 200–glutamine 229 the chain is on the cytoplasmic side. Residues threonine 230–tryptophan 250 traverse the membrane as a helical segment. Residues serine 251 to proline 259 lie on the Extracellular side of the membrane. A helical transmembrane segment spans residues valine 260 to isoleucine 280. Over tryptophan 281–proline 309 the chain is Cytoplasmic.

Belongs to the G-protein coupled receptor T2R family.

The protein localises to the membrane. It localises to the cell projection. It is found in the cilium membrane. Functionally, receptor that may play a role in the perception of bitterness and is gustducin-linked. May play a role in sensing the chemical composition of the gastrointestinal content. The activity of this receptor may stimulate alpha gustducin, mediate PLC-beta-2 activation and lead to the gating of TRPM5. In airway epithelial cells, binding of bitter compounds increases the intracellular calcium ion concentration and stimulates ciliary beat frequency. This is Taste receptor type 2 member 46 (TAS2R46) from Pan troglodytes (Chimpanzee).